The primary structure comprises 295 residues: Small ribosomal subunit protein uS2 (295 aa).

N-acetylserine is present on Ser2. Phosphoserine is present on Ser43. An N6-acetyllysine modification is found at Lys52. Positions 54-113 (TWEKLLLAARAIVAIENPADVSVISSRNTGQRAVLKFAAATGATPIAGRFTPGTFTNQIQ) are interaction with PPP1R16B. An N6-acetyllysine; alternate modification is found at Lys89. A Glycyl lysine isopeptide (Lys-Gly) (interchain with G-Cter in SUMO2); alternate cross-link involves residue Lys89. At Thr97 the chain carries Phosphothreonine. Laminin-binding stretches follow at residues 161–180 (IPCNNKGAHSVGLMWWMLAR) and 205–229 (RDPEEIEKEEQAAAEKAVTKEEFQG). [DE]-W-[ST] repeat units lie at residues 230-232 (EWT), 247-249 (DWS), 266-268 (DWS), 275-277 (DWS), and 293-295 (EWS). Residues 242–295 (QPEVADWSEGVQVPSVPIQQFPTEDWSAQPATEDWSAAPTAQATEWVGATTEWS) are laminin-binding. Residues 266-295 (DWSAQPATEDWSAAPTAQATEWVGATTEWS) form a disordered region.

The protein belongs to the universal ribosomal protein uS2 family. As to quaternary structure, monomer (37LRP) and homodimer (67LR). Component of the small ribosomal subunit. Mature ribosomes consist of a small (40S) and a large (60S) subunit. The 40S subunit contains about 33 different proteins and 1 molecule of RNA (18S). The 60S subunit contains about 49 different proteins and 3 molecules of RNA (28S, 5.8S and 5S). Interacts with RPS21. Interacts with several laminins including at least LAMB1. Interacts with MDK. The mature dimeric form interacts with PPP1R16B (via its fourth ankyrin repeat). Interacts with PPP1CA only in the presence of PPP1R16B. Acylated. Acylation may be a prerequisite for conversion of the monomeric 37 kDa laminin receptor precursor (37LRP) to the mature dimeric 67 kDa laminin receptor (67LR), and may provide a mechanism for membrane association. Post-translationally, cleaved by stromelysin-3 (ST3) at the cell surface. Cleavage by stromelysin-3 may be a mechanism to alter cell-extracellular matrix interactions.

It localises to the cell membrane. The protein resides in the cytoplasm. The protein localises to the nucleus. Functionally, required for the assembly and/or stability of the 40S ribosomal subunit. Required for the processing of the 20S rRNA-precursor to mature 18S rRNA in a late step of the maturation of 40S ribosomal subunits. Also functions as a cell surface receptor for laminin. Plays a role in cell adhesion to the basement membrane and in the consequent activation of signaling transduction pathways. May play a role in cell fate determination and tissue morphogenesis. Also acts as a receptor for several other ligands, including the pathogenic prion protein, viruses, and bacteria. Acts as a PPP1R16B-dependent substrate of PPP1CA. This chain is Small ribosomal subunit protein uS2, found in Chlorocebus aethiops (Green monkey).